Reading from the N-terminus, the 321-residue chain is Small ribosomal subunit protein mS43 (321 aa).

The transit peptide at 1-13 (MLRFTGARAIRKY) directs the protein to the mitochondrion.

Belongs to the mitochondrion-specific ribosomal protein mS43 family. In terms of assembly, component of the mitochondrial small ribosomal subunit (mt-SSU). Mature yeast 74S mitochondrial ribosomes consist of a small (37S) and a large (54S) subunit. The 37S small subunit contains a 15S ribosomal RNA (15S mt-rRNA) and 34 different proteins. The 54S large subunit contains a 21S rRNA (21S mt-rRNA) and 46 different proteins. mS43 forms a heterodimer with mS42, building a large protuberance adjacent to the mRNA channel exit in the mt-SSU body.

The protein resides in the mitochondrion. Component of the mitochondrial ribosome (mitoribosome), a dedicated translation machinery responsible for the synthesis of mitochondrial genome-encoded proteins, including at least some of the essential transmembrane subunits of the mitochondrial respiratory chain. The mitoribosomes are attached to the mitochondrial inner membrane and translation products are cotranslationally integrated into the membrane. The protein is Small ribosomal subunit protein mS43 (MRP1) of Saccharomyces cerevisiae (strain ATCC 204508 / S288c) (Baker's yeast).